Reading from the N-terminus, the 469-residue chain is Glutamate--tRNA ligase (469 aa).

The 'HIGH' region motif lies at 9–19 (PSPTGMFHVGG). The Zn(2+) site is built by Cys100, Cys102, Cys122, and Asp124. Residues 232–236 (KLSKR) carry the 'KMSKS' region motif. Position 235 (Lys235) interacts with ATP.

The protein belongs to the class-I aminoacyl-tRNA synthetase family. Glutamate--tRNA ligase type 1 subfamily. In terms of assembly, monomer. The cofactor is Zn(2+).

Its subcellular location is the cytoplasm. It catalyses the reaction tRNA(Glu) + L-glutamate + ATP = L-glutamyl-tRNA(Glu) + AMP + diphosphate. Catalyzes the attachment of glutamate to tRNA(Glu) in a two-step reaction: glutamate is first activated by ATP to form Glu-AMP and then transferred to the acceptor end of tRNA(Glu). This is Glutamate--tRNA ligase from Salinispora arenicola (strain CNS-205).